The chain runs to 339 residues: DNA-directed RNA polymerase subunit alpha (339 aa).

The alpha N-terminal domain (alpha-NTD) stretch occupies residues 1–233 (MVREEVAGST…DLFLPFLHAE (233 aa)). Positions 266 to 339 (GIPLNCIFID…IDLLKNKLSF (74 aa)) are alpha C-terminal domain (alpha-CTD).

It belongs to the RNA polymerase alpha chain family. As to quaternary structure, in plastids the minimal PEP RNA polymerase catalytic core is composed of four subunits: alpha, beta, beta', and beta''. When a (nuclear-encoded) sigma factor is associated with the core the holoenzyme is formed, which can initiate transcription.

The protein localises to the plastid. It localises to the chloroplast. The enzyme catalyses RNA(n) + a ribonucleoside 5'-triphosphate = RNA(n+1) + diphosphate. Its function is as follows. DNA-dependent RNA polymerase catalyzes the transcription of DNA into RNA using the four ribonucleoside triphosphates as substrates. This Hordeum bulbosum (Bulbous barley) protein is DNA-directed RNA polymerase subunit alpha.